Here is a 268-residue protein sequence, read N- to C-terminus: Zinc finger protein SNAI2 (268 aa).

The SNAG domain stretch occupies residues 1 to 20; the sequence is MPRSFLVKKHFNASKKPNYS. The disordered stretch occupies residues 84 to 116; sequence GRVSPLPSSDTSSKDHSGSESPISDEEERLQPK. 4 C2H2-type zinc fingers span residues 128–150, 159–181, 185–207, and 213–235; these read FQCN…KQLH, FSCK…IRTH, CVCK…IRTH, and FSCP…LQTH. Residues 241–264 form a C2H2-type 5; atypical zinc finger; it reads YQCKNCSKTFSRMSLLHKHEESGC.

This sequence belongs to the snail C2H2-type zinc-finger protein family. As to quaternary structure, interacts (via SNAG domain) with LIMD1 (via LIM domains), WTIP (via LIM domains) and AJUBA (via LIM domains). Interacts (via zinc fingers) with KPNA2, KPNB1 and TNPO1. May interact (via zinc fingers) with IPO7. Post-translationally, phosphorylated by GSK3B. Once phosphorylated, it becomes a target for ubiquitination. Ubiquitinated by the SCF(FBXO11) complex; ubiquitination requires previous GSK3B-mediated SNAI2 phosphorylation.

It localises to the nucleus. Its subcellular location is the cytoplasm. Functionally, transcriptional repressor that modulates both activator-dependent and basal transcription. Involved in the generation and migration of neural crest cells. Plays a role in mediating RAF1-induced transcriptional repression of the TJ protein, occludin (OCLN) and subsequent oncogenic transformation of epithelial cells. Represses BRCA2 expression by binding to its E2-box-containing silencer and recruiting CTBP1 and HDAC1 in breast cells. In epidermal keratinocytes, binds to the E-box in ITGA3 promoter and represses its transcription. Involved in the regulation of ITGB1 and ITGB4 expression and cell adhesion and proliferation in epidermal keratinocytes. Binds to E-box2 domain of BSG and activates its expression during TGFB1-induced epithelial-mesenchymal transition (EMT) in hepatocytes. Represses E-Cadherin/CDH1 transcription via E-box elements. Involved in osteoblast maturation. Binds to RUNX2 and SOC9 promoters and may act as a positive and negative transcription regulator, respectively, in osteoblasts. Binds to CXCL12 promoter via E-box regions in mesenchymal stem cells and osteoblasts. Plays an essential role in TWIST1-induced EMT and its ability to promote invasion and metastasis. In Rattus norvegicus (Rat), this protein is Zinc finger protein SNAI2 (Snai2).